The primary structure comprises 175 residues: Crossover junction endodeoxyribonuclease RuvC (175 aa).

Active-site residues include Asp-8, Glu-68, and Asp-140. Positions 8, 68, and 140 each coordinate Mg(2+).

This sequence belongs to the RuvC family. In terms of assembly, homodimer which binds Holliday junction (HJ) DNA. The HJ becomes 2-fold symmetrical on binding to RuvC with unstacked arms; it has a different conformation from HJ DNA in complex with RuvA. In the full resolvosome a probable DNA-RuvA(4)-RuvB(12)-RuvC(2) complex forms which resolves the HJ. It depends on Mg(2+) as a cofactor.

The protein localises to the cytoplasm. The catalysed reaction is Endonucleolytic cleavage at a junction such as a reciprocal single-stranded crossover between two homologous DNA duplexes (Holliday junction).. In terms of biological role, the RuvA-RuvB-RuvC complex processes Holliday junction (HJ) DNA during genetic recombination and DNA repair. Endonuclease that resolves HJ intermediates. Cleaves cruciform DNA by making single-stranded nicks across the HJ at symmetrical positions within the homologous arms, yielding a 5'-phosphate and a 3'-hydroxyl group; requires a central core of homology in the junction. The consensus cleavage sequence is 5'-(A/T)TT(C/G)-3'. Cleavage occurs on the 3'-side of the TT dinucleotide at the point of strand exchange. HJ branch migration catalyzed by RuvA-RuvB allows RuvC to scan DNA until it finds its consensus sequence, where it cleaves and resolves the cruciform DNA. In Pseudomonas fluorescens (strain Pf0-1), this protein is Crossover junction endodeoxyribonuclease RuvC.